Here is a 734-residue protein sequence, read N- to C-terminus: Photosystem I P700 chlorophyll a apoprotein A2 (734 aa).

8 consecutive transmembrane segments (helical) span residues 46-69, 135-158, 175-199, 273-291, 330-353, 369-395, 417-439, and 517-535; these read IFAS…FHVA, LYTG…LHLQ, LNHH…HVAI, IAHH…GHMY, LHFQ…QHMY, AALY…IFFV, AIIS…LYVH, and FLVH…LILV. Residues C559 and C568 each coordinate [4Fe-4S] cluster. The next 2 membrane-spanning stretches (helical) occupy residues 575 to 596 and 643 to 665; these read AFYL…YWHW and LSVW…MFLI. Chlorophyll a is bound by residues H654, M662, and Y670. W671 lines the phylloquinone pocket. A helical membrane pass occupies residues 707–727; it reads LVGLAHFSVGYVLTYAAFLIA.

It belongs to the PsaA/PsaB family. The PsaA/B heterodimer binds the P700 chlorophyll special pair and subsequent electron acceptors. PSI consists of a core antenna complex that captures photons, and an electron transfer chain that converts photonic excitation into a charge separation. The eukaryotic PSI reaction center is composed of at least 11 subunits. P700 is a chlorophyll a/chlorophyll a' dimer, A0 is one or more chlorophyll a, A1 is one or both phylloquinones and FX is a shared 4Fe-4S iron-sulfur center. serves as cofactor.

The protein resides in the plastid. It is found in the chloroplast thylakoid membrane. It carries out the reaction reduced [plastocyanin] + hnu + oxidized [2Fe-2S]-[ferredoxin] = oxidized [plastocyanin] + reduced [2Fe-2S]-[ferredoxin]. PsaA and PsaB bind P700, the primary electron donor of photosystem I (PSI), as well as the electron acceptors A0, A1 and FX. PSI is a plastocyanin-ferredoxin oxidoreductase, converting photonic excitation into a charge separation, which transfers an electron from the donor P700 chlorophyll pair to the spectroscopically characterized acceptors A0, A1, FX, FA and FB in turn. Oxidized P700 is reduced on the lumenal side of the thylakoid membrane by plastocyanin. The chain is Photosystem I P700 chlorophyll a apoprotein A2 from Chlorokybus atmophyticus (Soil alga).